We begin with the raw amino-acid sequence, 100 residues long: Large ribosomal subunit protein uL23 (100 aa).

It belongs to the universal ribosomal protein uL23 family. In terms of assembly, part of the 50S ribosomal subunit. Contacts protein L29, and trigger factor when it is bound to the ribosome.

Its function is as follows. One of the early assembly proteins it binds 23S rRNA. One of the proteins that surrounds the polypeptide exit tunnel on the outside of the ribosome. Forms the main docking site for trigger factor binding to the ribosome. This chain is Large ribosomal subunit protein uL23, found in Pseudoalteromonas translucida (strain TAC 125).